Reading from the N-terminus, the 176-residue chain is Ribosome rescue factor SmrB (176 aa).

In terms of domain architecture, Smr spans 98-173 (LDLHGLNQYQ…NDAAIMVIIE (76 aa)).

This sequence belongs to the SmrB family. As to quaternary structure, associates with collided ribosomes, but not with correctly translating polysomes.

In terms of biological role, acts as a ribosome collision sensor. Detects stalled/collided disomes (pairs of ribosomes where the leading ribosome is stalled and a second ribosome has collided with it) and endonucleolytically cleaves mRNA at the 5' boundary of the stalled ribosome. Stalled/collided disomes form a new interface (primarily via the 30S subunits) that binds SmrB. Cleaved mRNA becomes available for tmRNA ligation, leading to ribosomal subunit dissociation and rescue of stalled ribosomes. In Buchnera aphidicola subsp. Schizaphis graminum (strain Sg), this protein is Ribosome rescue factor SmrB.